A 343-amino-acid polypeptide reads, in one-letter code: 3-dehydroquinate synthase (343 aa).

NAD(+)-binding positions include 61–66 (SGEKYK), 95–99 (GVISD), 119–120 (TT), Lys132, Lys141, and 159–162 (FLKT). Zn(2+) is bound by residues Glu174, His231, and His248.

This sequence belongs to the sugar phosphate cyclases superfamily. Dehydroquinate synthase family. It depends on Co(2+) as a cofactor. Zn(2+) is required as a cofactor. Requires NAD(+) as cofactor.

The protein resides in the cytoplasm. It carries out the reaction 7-phospho-2-dehydro-3-deoxy-D-arabino-heptonate = 3-dehydroquinate + phosphate. It functions in the pathway metabolic intermediate biosynthesis; chorismate biosynthesis; chorismate from D-erythrose 4-phosphate and phosphoenolpyruvate: step 2/7. Functionally, catalyzes the conversion of 3-deoxy-D-arabino-heptulosonate 7-phosphate (DAHP) to dehydroquinate (DHQ). This chain is 3-dehydroquinate synthase, found in Helicobacter pylori (strain P12).